We begin with the raw amino-acid sequence, 831 residues long: MEAFGGFVMDEQAIQVENVFLEFLKSFRLDANKPELYYEAEIEAIRGGESTMMYIDFSHVMGFNDALQKAIADEYLRFEPYLRNACKRFVIEMNPSFISDDTPNKDINVSFYNLPFTKRLRELTTAEIGKLVSVTGVVTRTSEVRPELLYGTFKCLDCGSVIKNVEQQFKYTQPTICVSPTCLNRARWALLRQESKFADWQRVRMQETSKEIPAGSLPRSLDVILRHEIVEQARAGDTVIFTGTVVVIPDISALAAPGERAECRRDSSQQKSSTAGHEGVQGLKALGVRDLSYRLAFIANSVQIADGSRNTDMRNRQNDSNEDDQQQFTAEELDEIQQMRNTPDYFNKLVGSMAPTVFGHQDIKRAVLLMLLGGVHKTTHEGINLRGDINVCIVGDPSCAKSQFLKYTAGIVPRSVYTSGKSSSAAGLTATVAKEPETGEFCIEAGALMLADNGICCIDEFDKMDIKDQVAIHEAMEQQTISITKAGIQATLNARTSILAAANPVGGRYDKSKPLKYNVNLPPAILSRFDLVYVMIDDPDEVTDYHIAHHIVRVHQKHEAALSPEFTTVQLKRYIAYAKTLKPKLSPEARKLLVESYVALRRGDTTPGTRVAYRMTVRQLEALIRLSEAIARSHLEILVKPSHVLLAVRLLKTSVISVESGDIDLSEYQDANGDNMDDTDDIENPVDGEEDQQNGAAEPASATADNGAAAQKLVISEEEYDRITQALVIRLRQHEETVNKDSSELPGIRQKELIRWFIDQQNEKKKYSSQEQVKLDIKKLRAIIESLVCKEGHLIVLANEQEEAAEAEETKKKSSQRDERILAVAPNYVIE.

The C4-type zinc-finger motif lies at 155–182 (CLDCGSVIKNVEQQFKYTQPTICVSPTC). The segment at 258–278 (GERAECRRDSSQQKSSTAGHE) is disordered. Basic and acidic residues predominate over residues 259–268 (ERAECRRDSS). An MCM domain is found at 345-551 (YFNKLVGSMA…VTDYHIAHHI (207 aa)). 395–402 (GDPSCAKS) provides a ligand contact to ATP. The short motif at 527 to 530 (SRFD) is the Arginine finger element. The interval 666-705 (SEYQDANGDNMDDTDDIENPVDGEEDQQNGAAEPASATAD) is disordered. A compositionally biased stretch (acidic residues) spans 675–692 (NMDDTDDIENPVDGEEDQ).

Belongs to the MCM family. As to quaternary structure, component of the minichromosome maintenance (MCM) complex, a heterotetramer composed of MCM2, MCM3, MCM4, MCM5, MCM6 and MCM7. Interacts with ETG1. As to expression, expressed in shoot apex and flower buds.

It localises to the nucleus. It carries out the reaction ATP + H2O = ADP + phosphate + H(+). In terms of biological role, probable component of the MCM2-7 complex (MCM complex) that may function as a DNA helicase and which is essential to undergo a single round of replication initiation and elongation per cell cycle in eukaryotic cells. The protein is DNA replication licensing factor MCM6 (MCM6) of Arabidopsis thaliana (Mouse-ear cress).